We begin with the raw amino-acid sequence, 314 residues long: MVKKNFIPSVSLVRRDLPTLVTTTTSSTALSKPTSSVVSETSSKSLPSLTSSAFSTSSGATSSSSLIVASITPPSTAGNPFILNAADKPNGTVYIAVGAVIGAIFISILIWWLVSSYLSRRFTMTNSYANDSKNLYRGHHKHSSSLQSNPFDINDEKSYMQDDWDSMSQLESSQYEDAASPFNPIQDPFTDNRRSLFISPTLQVSQYEKSHSRHQSKDTNIFIDDPSLYVGTYLEEEEEEERKLNLNRPQRAASPERKEKKINSMEGYHKRNQSSLGLIPVASATSNTSSPKKAHKRQAPSMFLDDVLNGREII.

Residues 32–60 (KPTSSVVSETSSKSLPSLTSSAFSTSSGA) are disordered. The chain crosses the membrane as a helical span at residues 93-113 (VYIAVGAVIGAIFISILIWWL). Residues Ser148, Ser254, and Ser274 each carry the phosphoserine modification. Residues 240–309 (EERKLNLNRP…PSMFLDDVLN (70 aa)) form a disordered region. Residues 254 to 269 (SPERKEKKINSMEGYH) are compositionally biased toward basic and acidic residues.

The protein belongs to the PRM5 family.

The protein resides in the vacuole membrane. This is Vacuolar membrane protein SCRG_03194 from Saccharomyces cerevisiae (strain RM11-1a) (Baker's yeast).